Here is a 438-residue protein sequence, read N- to C-terminus: Aflatoxin cluster transcriptional coactivator aflS (438 aa).

Residues 65–134 form the HTH iclR-type domain; the sequence is LALYNQLLAC…PSPGHVAHSV (70 aa). A DNA-binding region (H-T-H motif) is located at residues 95 to 114; it reads FEDVADIAGVPECRLRRLVR.

As to quaternary structure, interacts with aflR.

It localises to the nucleus. The protein resides in the endosome. In terms of biological role, transcription coactivator involved in regulation of the aflatoxin biosynthesis gene cluster with aflR. The ratio of the expression data between aflS:aflR plays a crucial role in the regulation of aflatoxins production. A high ratio, produced at a range between 17 and 30 degrees Celsius, corresponds with the production profile of aflatoxin G1 biosynthesis. A low ratio, produced over 30 degrees Celsius, is related to aflatoxin B1 biosynthesis. AflJ may act in aflR transport to or from the nucleus, thus controlling the availability of aflR for transcriptional activation of aflatoxin biosynthesis cluster genes. AflJ may also assist in directing endosomes to the cytoplasmic membrane for aflatoxin export. In Aspergillus parasiticus (strain ATCC 56775 / NRRL 5862 / SRRC 143 / SU-1), this protein is Aflatoxin cluster transcriptional coactivator aflS.